An 89-amino-acid chain; its full sequence is Small ribosomal subunit protein uS15 (89 aa).

The segment at 1 to 23 (MTLNTEAKQKIINKHQTHGTDTG) is disordered.

This sequence belongs to the universal ribosomal protein uS15 family. In terms of assembly, part of the 30S ribosomal subunit. Forms a bridge to the 50S subunit in the 70S ribosome, contacting the 23S rRNA.

Its function is as follows. One of the primary rRNA binding proteins, it binds directly to 16S rRNA where it helps nucleate assembly of the platform of the 30S subunit by binding and bridging several RNA helices of the 16S rRNA. Forms an intersubunit bridge (bridge B4) with the 23S rRNA of the 50S subunit in the ribosome. The chain is Small ribosomal subunit protein uS15 from Prochlorococcus marinus (strain SARG / CCMP1375 / SS120).